Reading from the N-terminus, the 1072-residue chain is Isoleucine--tRNA ligase, cytoplasmic (1072 aa).

Positions 47–57 (PFATGTPHYGH) match the 'HIGH' region motif. Lysine 486 participates in a covalent cross-link: Glycyl lysine isopeptide (Lys-Gly) (interchain with G-Cter in ubiquitin). A 'KMSKS' region motif is present at residues 602–606 (KMSKS). Lysine 605 contacts ATP. Serine 829 and serine 1059 each carry phosphoserine.

The protein belongs to the class-I aminoacyl-tRNA synthetase family.

Its subcellular location is the cytoplasm. It catalyses the reaction tRNA(Ile) + L-isoleucine + ATP = L-isoleucyl-tRNA(Ile) + AMP + diphosphate. The protein is Isoleucine--tRNA ligase, cytoplasmic (ILS1) of Saccharomyces cerevisiae (strain ATCC 204508 / S288c) (Baker's yeast).